The sequence spans 472 residues: 3-isopropylmalate dehydratase large subunit (472 aa).

Positions 347, 407, and 410 each coordinate [4Fe-4S] cluster.

The protein belongs to the aconitase/IPM isomerase family. LeuC type 1 subfamily. As to quaternary structure, heterodimer of LeuC and LeuD. [4Fe-4S] cluster serves as cofactor.

The enzyme catalyses (2R,3S)-3-isopropylmalate = (2S)-2-isopropylmalate. It functions in the pathway amino-acid biosynthesis; L-leucine biosynthesis; L-leucine from 3-methyl-2-oxobutanoate: step 2/4. Catalyzes the isomerization between 2-isopropylmalate and 3-isopropylmalate, via the formation of 2-isopropylmaleate. This is 3-isopropylmalate dehydratase large subunit from Bacillus velezensis (strain DSM 23117 / BGSC 10A6 / LMG 26770 / FZB42) (Bacillus amyloliquefaciens subsp. plantarum).